A 439-amino-acid chain; its full sequence is Probable cinnamyl alcohol dehydrogenase 8C (439 aa).

C120 lines the Zn(2+) pocket. T122 provides a ligand contact to NADP(+). 7 residues coordinate Zn(2+): H142, E143, C173, C176, C179, C187, and C239. NADP(+) is bound by residues T243, 264–269 (GLGGLG), 287–292 (STSPGK), T327, G351, and 374–376 (NCV).

It belongs to the zinc-containing alcohol dehydrogenase family. Homodimer. Requires Zn(2+) as cofactor.

The catalysed reaction is (E)-cinnamyl alcohol + NADP(+) = (E)-cinnamaldehyde + NADPH + H(+). It catalyses the reaction (E)-coniferol + NADP(+) = (E)-coniferaldehyde + NADPH + H(+). The enzyme catalyses (E)-sinapyl alcohol + NADP(+) = (E)-sinapaldehyde + NADPH + H(+). It carries out the reaction (E)-4-coumaroyl alcohol + NADP(+) = (E)-4-coumaraldehyde + NADPH + H(+). The catalysed reaction is (E)-caffeyl alcohol + NADP(+) = (E)-caffeyl aldehyde + NADPH + H(+). The protein operates within aromatic compound metabolism; phenylpropanoid biosynthesis. Its function is as follows. Involved in lignin biosynthesis. Catalyzes the final step specific for the production of lignin monomers. Catalyzes the NADPH-dependent reduction of coniferaldehyde, 5-hydroxyconiferaldehyde, sinapaldehyde, 4-coumaraldehyde and caffeyl aldehyde to their respective alcohols. This chain is Probable cinnamyl alcohol dehydrogenase 8C, found in Oryza sativa subsp. japonica (Rice).